The sequence spans 175 residues: Small ribosomal subunit protein uS4 (175 aa).

The region spanning 105–169 (RRLQTIVYRQ…SPLADSLHPA (65 aa)) is the S4 RNA-binding domain.

Belongs to the universal ribosomal protein uS4 family. Part of the 30S ribosomal subunit. Contacts protein S5. The interaction surface between S4 and S5 is involved in control of translational fidelity.

Its function is as follows. One of the primary rRNA binding proteins, it binds directly to 16S rRNA where it nucleates assembly of the body of the 30S subunit. With S5 and S12 plays an important role in translational accuracy. The chain is Small ribosomal subunit protein uS4 from Haloquadratum walsbyi (strain DSM 16790 / HBSQ001).